A 271-amino-acid chain; its full sequence is Probable ribosomal RNA small subunit methyltransferase A (271 aa).

Positions 12, 37, 58, 83, and 100 each coordinate S-adenosyl-L-methionine.

The protein belongs to the class I-like SAM-binding methyltransferase superfamily. rRNA adenine N(6)-methyltransferase family. RsmA subfamily.

Its subcellular location is the cytoplasm. Its function is as follows. Specifically dimethylates two adjacent adenosines in the loop of a conserved hairpin near the 3'-end of 16S rRNA in the 30S particle. May play a critical role in biogenesis of 30S subunits. The chain is Probable ribosomal RNA small subunit methyltransferase A from Methanococcus aeolicus (strain ATCC BAA-1280 / DSM 17508 / OCM 812 / Nankai-3).